Here is a 143-residue protein sequence, read N- to C-terminus: Flagellar assembly factor FliW (143 aa).

It belongs to the FliW family. Interacts with translational regulator CsrA and flagellin(s).

It localises to the cytoplasm. Acts as an anti-CsrA protein, binds CsrA and prevents it from repressing translation of its target genes, one of which is flagellin. Binds to flagellin and participates in the assembly of the flagellum. This chain is Flagellar assembly factor FliW, found in Bacillus velezensis (strain DSM 23117 / BGSC 10A6 / LMG 26770 / FZB42) (Bacillus amyloliquefaciens subsp. plantarum).